The primary structure comprises 177 residues: ATP synthase subunit delta (177 aa).

Belongs to the ATPase delta chain family. In terms of assembly, F-type ATPases have 2 components, F(1) - the catalytic core - and F(0) - the membrane proton channel. F(1) has five subunits: alpha(3), beta(3), gamma(1), delta(1), epsilon(1). F(0) has three main subunits: a(1), b(2) and c(10-14). The alpha and beta chains form an alternating ring which encloses part of the gamma chain. F(1) is attached to F(0) by a central stalk formed by the gamma and epsilon chains, while a peripheral stalk is formed by the delta and b chains.

It localises to the cell inner membrane. Its function is as follows. F(1)F(0) ATP synthase produces ATP from ADP in the presence of a proton or sodium gradient. F-type ATPases consist of two structural domains, F(1) containing the extramembraneous catalytic core and F(0) containing the membrane proton channel, linked together by a central stalk and a peripheral stalk. During catalysis, ATP synthesis in the catalytic domain of F(1) is coupled via a rotary mechanism of the central stalk subunits to proton translocation. This protein is part of the stalk that links CF(0) to CF(1). It either transmits conformational changes from CF(0) to CF(1) or is implicated in proton conduction. In Shewanella woodyi (strain ATCC 51908 / MS32), this protein is ATP synthase subunit delta.